A 233-amino-acid chain; its full sequence is 7-cyano-7-deazaguanine synthase (233 aa).

18 to 28 (FSGGQDSTTCL) is an ATP binding site. Cys-198, Cys-213, Cys-216, and Cys-219 together coordinate Zn(2+).

Belongs to the QueC family. Requires Zn(2+) as cofactor.

It carries out the reaction 7-carboxy-7-deazaguanine + NH4(+) + ATP = 7-cyano-7-deazaguanine + ADP + phosphate + H2O + H(+). It participates in purine metabolism; 7-cyano-7-deazaguanine biosynthesis. In terms of biological role, catalyzes the ATP-dependent conversion of 7-carboxy-7-deazaguanine (CDG) to 7-cyano-7-deazaguanine (preQ(0)). In Wolinella succinogenes (strain ATCC 29543 / DSM 1740 / CCUG 13145 / JCM 31913 / LMG 7466 / NCTC 11488 / FDC 602W) (Vibrio succinogenes), this protein is 7-cyano-7-deazaguanine synthase.